The following is a 598-amino-acid chain: Thiol:disulfide interchange protein DsbD (598 aa).

A signal peptide spans M1–A19. An intrachain disulfide couples C122 to C128. Residues D147–A187 are disordered. Residues F165–A176 are compositionally biased toward pro residues. Transmembrane regions (helical) follow at residues L197–V217, L242–V262, Y277–F297, I330–I350, L356–L376, W391–L411, and L423–T443. A disulfide bridge connects residues C216 and C338. The Thioredoxin domain maps to L459 to A598. C513 and C516 are oxidised to a cystine.

This sequence belongs to the thioredoxin family. DsbD subfamily.

It is found in the cell inner membrane. The enzyme catalyses [protein]-dithiol + NAD(+) = [protein]-disulfide + NADH + H(+). The catalysed reaction is [protein]-dithiol + NADP(+) = [protein]-disulfide + NADPH + H(+). In terms of biological role, required to facilitate the formation of correct disulfide bonds in some periplasmic proteins and for the assembly of the periplasmic c-type cytochromes. Acts by transferring electrons from cytoplasmic thioredoxin to the periplasm. This transfer involves a cascade of disulfide bond formation and reduction steps. The sequence is that of Thiol:disulfide interchange protein DsbD from Klebsiella pneumoniae subsp. pneumoniae (strain ATCC 700721 / MGH 78578).